Reading from the N-terminus, the 698-residue chain is Superoxide-generating NADPH oxidase heavy chain subunit B (698 aa).

Disordered stretches follow at residues 1–68 (MNEK…NITP) and 134–158 (NDQV…NNKN). Residues 1 to 184 (MNEKKELQQE…KIRGWWWHRG (184 aa)) lie on the Cytoplasmic side of the membrane. 2 stretches are compositionally biased toward polar residues: residues 16-25 (FQTPKNQQLE) and 33-53 (EISS…PISQ). Low complexity-rich tracts occupy residues 54 to 65 (NDNSNNENESLN) and 138 to 156 (NSNT…TNNN). The helical transmembrane segment at 185-205 (ISTYIMLFYIALNIGVGVHMF) threads the bilayer. Over 206–229 (YNMYHSDIFKFLGLSFCFSRTAAR) the chain is Extracellular. One can recognise a Ferric oxidoreductase domain in the interval 225–375 (RTAARLINLN…LFIPFYILLC (151 aa)). Residues 230 to 250 (LINLNSAVILLPVLRNFLSWL) form a helical membrane-spanning segment. The Cytoplasmic portion of the chain corresponds to 251 to 269 (RGTIVNNYIPIDKHLNFHK). The heme site is built by His-268 and His-282. Residues 270-290 (LCAFMLFCCTIIHCVGHYISF) traverse the membrane as a helical segment. At 291 to 324 (KKINDDVLKIDDGKSVAGDYLNININNFPDEKYL) the chain is on the extracellular side. A helical transmembrane segment spans residues 325-345 (FFKSVPGITGHIMLLILILIV). Topologically, residues 346–355 (SSSMWRIRRP) are cytoplasmic. A helical membrane pass occupies residues 356–376 (MFEIFWYVHHLFIPFYILLCF). His-364 and His-377 together coordinate heme. Topologically, residues 377–388 (HGYSKILKKDPQ) are extracellular. The chain crosses the membrane as a helical span at residues 389-409 (SWMWIIAPFILYSIERLIRIA). Positions 404-528 (RLIRIARSKK…DGPFGAPAEN (125 aa)) constitute an FAD-binding FR-type domain. Residues 410-698 (RSKKRVILEK…CHLIFHKENF (289 aa)) are Cytoplasmic-facing. FAD is bound at residue 460 to 466 (HPFTITS).

In terms of assembly, composed of a heavy chain and a light chain. The cofactor is FAD.

It localises to the membrane. In terms of biological role, critical component of the membrane-bound oxidase that generates superoxide. It is the terminal component of a respiratory chain that transfers single electrons from cytoplasmic NADPH across the plasma membrane to molecular oxygen on the exterior. This Dictyostelium discoideum (Social amoeba) protein is Superoxide-generating NADPH oxidase heavy chain subunit B (noxB).